Reading from the N-terminus, the 217-residue chain is Zinc finger CCHC-type and RNA-binding motif-containing protein 1 (217 aa).

Positions 10–88 (STVYVSNLPF…RVIKASIAID (79 aa)) constitute an RRM domain. A CCHC-type zinc finger spans residues 105-122 (SKCYECGESGHLSYACPK). The interval 120 to 217 (CPKNMLGERE…YFSDEEELSD (98 aa)) is disordered. Over residues 145–163 (PEEEIEEVEVSEEEGEDPA) the composition is skewed to acidic residues. 3 positions are modified to phosphoserine: Ser-155, Ser-210, and Ser-216.

In terms of assembly, component of the U11/U12 snRNPs that are part of the U12-type spliceosome. Interacts with ZRSR1.

The protein resides in the nucleus. It localises to the nucleoplasm. The polypeptide is Zinc finger CCHC-type and RNA-binding motif-containing protein 1 (Zcrb1) (Rattus norvegicus (Rat)).